The primary structure comprises 327 residues: Sideroflexin-2 (327 aa).

5 helical membrane passes run 99–119 (GMLI…VVLW), 143–163 (VTQL…AAIG), 175–195 (LFQR…NIPL), 228–248 (EVVV…PLIM), and 267–287 (FQTL…CALF).

It belongs to the sideroflexin family.

The protein resides in the mitochondrion membrane. The catalysed reaction is L-serine(in) = L-serine(out). Its function is as follows. Mitochondrial amino-acid transporter that mediates transport of serine into mitochondria. This Drosophila melanogaster (Fruit fly) protein is Sideroflexin-2.